The following is an 820-amino-acid chain: Leucine--tRNA ligase (820 aa).

The short motif at 42–52 is the 'HIGH' region element; that stretch reads PYPSGDLHMGH. The short motif at 576 to 580 is the 'KMSKS' region element; sequence KMSKS. Lys-579 provides a ligand contact to ATP.

This sequence belongs to the class-I aminoacyl-tRNA synthetase family.

It localises to the cytoplasm. It carries out the reaction tRNA(Leu) + L-leucine + ATP = L-leucyl-tRNA(Leu) + AMP + diphosphate. The chain is Leucine--tRNA ligase from Coxiella burnetii (strain CbuK_Q154) (Coxiella burnetii (strain Q154)).